Here is a 528-residue protein sequence, read N- to C-terminus: Peptide chain release factor 3 (528 aa).

Residues 10–280 (AKRRTFGIIS…IDMAPAPGPR (271 aa)) form the tr-type G domain. GTP is bound by residues 19 to 26 (SHPDAGKT), 87 to 91 (DTPGH), and 141 to 144 (NKLD).

The protein belongs to the TRAFAC class translation factor GTPase superfamily. Classic translation factor GTPase family. PrfC subfamily.

Its subcellular location is the cytoplasm. Its function is as follows. Increases the formation of ribosomal termination complexes and stimulates activities of RF-1 and RF-2. It binds guanine nucleotides and has strong preference for UGA stop codons. It may interact directly with the ribosome. The stimulation of RF-1 and RF-2 is significantly reduced by GTP and GDP, but not by GMP. This Desulfotalea psychrophila (strain LSv54 / DSM 12343) protein is Peptide chain release factor 3.